The following is a 117-amino-acid chain: Ribosome-binding factor A (117 aa).

The protein belongs to the RbfA family. In terms of assembly, monomer. Binds 30S ribosomal subunits, but not 50S ribosomal subunits or 70S ribosomes.

The protein localises to the cytoplasm. Its function is as follows. One of several proteins that assist in the late maturation steps of the functional core of the 30S ribosomal subunit. Associates with free 30S ribosomal subunits (but not with 30S subunits that are part of 70S ribosomes or polysomes). Required for efficient processing of 16S rRNA. May interact with the 5'-terminal helix region of 16S rRNA. The protein is Ribosome-binding factor A of Lactiplantibacillus plantarum (strain ATCC BAA-793 / NCIMB 8826 / WCFS1) (Lactobacillus plantarum).